A 237-amino-acid polypeptide reads, in one-letter code: NAD-dependent protein deacetylase (237 aa).

A Deacetylase sirtuin-type domain is found at 1 to 237 (MLTTWLTEAK…LEETNRALQA (237 aa)). Residues Ala-18, Thr-22, Phe-29, Arg-30, Gln-95, Asp-98, and His-113 each coordinate NAD(+). Phe-29 serves as a coordination point for nicotinamide. Asp-98 is a binding site for nicotinamide. His-113 acts as the Proton acceptor in catalysis. The Zn(2+) site is built by Cys-121, Cys-124, Cys-140, and Cys-142. 4 residues coordinate NAD(+): Ser-180, Ser-181, Asn-205, and Ile-224.

Belongs to the sirtuin family. Class U subfamily. Zn(2+) serves as cofactor.

It is found in the cytoplasm. The enzyme catalyses N(6)-acetyl-L-lysyl-[protein] + NAD(+) + H2O = 2''-O-acetyl-ADP-D-ribose + nicotinamide + L-lysyl-[protein]. NAD-dependent protein deacetylase which modulates the activities of several enzymes which are inactive in their acetylated form. This chain is NAD-dependent protein deacetylase, found in Halalkalibacterium halodurans (strain ATCC BAA-125 / DSM 18197 / FERM 7344 / JCM 9153 / C-125) (Bacillus halodurans).